Consider the following 293-residue polypeptide: 4-hydroxy-tetrahydrodipicolinate synthase (293 aa).

Thr-45 contacts pyruvate. Tyr-133 functions as the Proton donor/acceptor in the catalytic mechanism. Lys-161 serves as the catalytic Schiff-base intermediate with substrate. Val-203 contributes to the pyruvate binding site.

This sequence belongs to the DapA family. As to quaternary structure, homotetramer; dimer of dimers.

It localises to the cytoplasm. The enzyme catalyses L-aspartate 4-semialdehyde + pyruvate = (2S,4S)-4-hydroxy-2,3,4,5-tetrahydrodipicolinate + H2O + H(+). Its pathway is amino-acid biosynthesis; L-lysine biosynthesis via DAP pathway; (S)-tetrahydrodipicolinate from L-aspartate: step 3/4. Functionally, catalyzes the condensation of (S)-aspartate-beta-semialdehyde [(S)-ASA] and pyruvate to 4-hydroxy-tetrahydrodipicolinate (HTPA). The sequence is that of 4-hydroxy-tetrahydrodipicolinate synthase from Exiguobacterium sp. (strain ATCC BAA-1283 / AT1b).